A 115-amino-acid polypeptide reads, in one-letter code: Ribonuclease P protein component 4 (115 aa).

Zn(2+) contacts are provided by cysteine 66, cysteine 69, cysteine 96, and cysteine 99.

It belongs to the eukaryotic/archaeal RNase P protein component 4 family. Consists of a catalytic RNA component and at least 4-5 protein subunits. Zn(2+) is required as a cofactor.

Its subcellular location is the cytoplasm. The catalysed reaction is Endonucleolytic cleavage of RNA, removing 5'-extranucleotides from tRNA precursor.. Its function is as follows. Part of ribonuclease P, a protein complex that generates mature tRNA molecules by cleaving their 5'-ends. The polypeptide is Ribonuclease P protein component 4 (Hyperthermus butylicus (strain DSM 5456 / JCM 9403 / PLM1-5)).